A 344-amino-acid chain; its full sequence is MLNALYPLARPLLFSMDPEDAHHFTLNQLKRAHALGLSGCIGARVAPQPRTVMGIAFPNPVGLAAGLDKDGAYIDALGALGFGFIEVGTVTPRAQPGNPRPRMFRLPAASALINRMGFNNGGVDAFIRNVQASKWREAGGVLGLNIGKNADTPIERAVDDYLHCLERVYPYASYVTVNISSPNTKNLRQLQGASELDSLLGTLRGAQQRLADQHKRYVPVVLKIAPDLDDDQIANIGDALLRHRMDGVIATNTTIRREAVAGLPHAEEAGGLSGQPVREGSTRVIRALCGLLGDAVPIIGVGGILAGEHAREKIDAGAQLVQLYTGLIYRGPGLVAECARALAR.

FMN-binding positions include 65-69 (AGLDK) and T89. K69 serves as a coordination point for substrate. 114–118 (NRMGF) is a substrate binding site. Residues N145 and N178 each contribute to the FMN site. N178 is a binding site for substrate. S181 functions as the Nucleophile in the catalytic mechanism. N183 provides a ligand contact to substrate. FMN contacts are provided by K223 and T251. 252-253 (NT) lines the substrate pocket. FMN contacts are provided by residues G274, G303, and 324 to 325 (YT).

This sequence belongs to the dihydroorotate dehydrogenase family. Type 2 subfamily. Monomer. Requires FMN as cofactor.

Its subcellular location is the cell membrane. It catalyses the reaction (S)-dihydroorotate + a quinone = orotate + a quinol. The protein operates within pyrimidine metabolism; UMP biosynthesis via de novo pathway; orotate from (S)-dihydroorotate (quinone route): step 1/1. Its function is as follows. Catalyzes the conversion of dihydroorotate to orotate with quinone as electron acceptor. The sequence is that of Dihydroorotate dehydrogenase (quinone) from Ralstonia nicotianae (strain ATCC BAA-1114 / GMI1000) (Ralstonia solanacearum).